Consider the following 150-residue polypeptide: Transthyretin (150 aa).

Residues 1 to 20 (MGSSSLLLVCLAGMVYLTEA) form the signal peptide. A Sulfocysteine modification is found at cysteine 33. L-thyroxine contacts are provided by lysine 38, glutamate 77, and serine 140.

Belongs to the transthyretin family. Homotetramer. Dimer of dimers. In the homotetramer, subunits assemble around a central channel that can accommodate two ligand molecules. Interacts with RBP4. Sulfonation of the reactive cysteine Cys-33 enhances the stability of the native conformation of TTR, avoiding misassembly of the protein leading to amyloid formation. Detected in choroid plexus (at protein level). Detected in choroid plexus.

It localises to the secreted. Its function is as follows. Thyroid hormone-binding protein. Probably transports thyroxine from the bloodstream to the brain. The polypeptide is Transthyretin (TTR) (Tiliqua rugosa (Shingleback lizard)).